A 113-amino-acid polypeptide reads, in one-letter code: UPF0102 protein Ccon26_01140 (113 aa).

This sequence belongs to the UPF0102 family.

The sequence is that of UPF0102 protein Ccon26_01140 from Campylobacter concisus (strain 13826).